Reading from the N-terminus, the 461-residue chain is UPF0210 protein LCABL_10110 (461 aa).

The protein belongs to the UPF0210 family. As to quaternary structure, homodimer.

The protein is UPF0210 protein LCABL_10110 of Lacticaseibacillus casei (strain BL23) (Lactobacillus casei).